A 218-amino-acid polypeptide reads, in one-letter code: Small ribosomal subunit protein uS3c (218 aa).

Residues 43–118 (IKDYVKKNKK…RLNIAITRIE (76 aa)) enclose the KH type-2 domain.

Belongs to the universal ribosomal protein uS3 family. As to quaternary structure, part of the 30S ribosomal subunit.

The protein localises to the plastid. It localises to the chloroplast. This is Small ribosomal subunit protein uS3c (rps3) from Phalaenopsis aphrodite subsp. formosana (Moth orchid).